A 321-amino-acid chain; its full sequence is uncharacterized protein (321 aa).

The signal sequence occupies residues Met1–Ser18.

This is an uncharacterized protein from Aquifex aeolicus (strain VF5).